The following is a 302-amino-acid chain: MKVIFMGTPEFAVPALKKLITHHEVKAVFTQQPKAKGRGLNLAKSPIHQLAFEHQIPVYTPSTLRNDVINLINKVNADIIVVIAYGFIVPQAILEAKKYGCLNIHPSDLPRHRGAAPLQRTIIEGDRKSSVCIMRMDTGLDTGDILMKEDFDLEERTTLEELHNKCANLGAELLIKILANIDNIVPIKQSSDGVTYAHKLTKEEGKINWHESAYKIDCKIRGMNPWPGAYFSYNDKIIKILEAEYLNADHHFTSGTVISDKLEIACGSGILRVKKLQQESKKALNIEEFLRGTNILKDTVLK.

107 to 110 (SDLP) is a binding site for (6S)-5,6,7,8-tetrahydrofolate.

This sequence belongs to the Fmt family.

The catalysed reaction is L-methionyl-tRNA(fMet) + (6R)-10-formyltetrahydrofolate = N-formyl-L-methionyl-tRNA(fMet) + (6S)-5,6,7,8-tetrahydrofolate + H(+). In terms of biological role, attaches a formyl group to the free amino group of methionyl-tRNA(fMet). The formyl group appears to play a dual role in the initiator identity of N-formylmethionyl-tRNA by promoting its recognition by IF2 and preventing the misappropriation of this tRNA by the elongation apparatus. The sequence is that of Methionyl-tRNA formyltransferase from Rickettsia massiliae (strain Mtu5).